The sequence spans 200 residues: 7-methyl-GTP pyrophosphatase (200 aa).

D75 acts as the Proton acceptor in catalysis.

Belongs to the Maf family. YceF subfamily. A divalent metal cation serves as cofactor.

Its subcellular location is the cytoplasm. It carries out the reaction N(7)-methyl-GTP + H2O = N(7)-methyl-GMP + diphosphate + H(+). Functionally, nucleoside triphosphate pyrophosphatase that hydrolyzes 7-methyl-GTP (m(7)GTP). May have a dual role in cell division arrest and in preventing the incorporation of modified nucleotides into cellular nucleic acids. The sequence is that of 7-methyl-GTP pyrophosphatase from Hydrogenovibrio crunogenus (strain DSM 25203 / XCL-2) (Thiomicrospira crunogena).